The following is a 249-amino-acid chain: Flagellar brake protein YcgR (249 aa).

A PilZ domain is found at 117–236 (QRREFFRVDA…ERELQQVIFS (120 aa)).

The protein belongs to the YcgR family. As to quaternary structure, monomer. Interacts with the flagellar basal bodies.

The protein resides in the bacterial flagellum basal body. Functionally, acts as a flagellar brake, regulating swimming and swarming in a bis-(3'-5') cyclic diguanylic acid (c-di-GMP)-dependent manner. Binds 1 c-di-GMP dimer per subunit. Increasing levels of c-di-GMP lead to decreased motility. This chain is Flagellar brake protein YcgR, found in Erwinia tasmaniensis (strain DSM 17950 / CFBP 7177 / CIP 109463 / NCPPB 4357 / Et1/99).